The chain runs to 349 residues: MAGKKVCIVGSGNWGSAIAKIVGSNAGRLAHFDPRVTMWVFEEDIGGRKLTEIINTQHENVKYLPGHKLPPNVVAIPDVVQAATGADILVFVVPHQFIGKICDQLKGHLKANTIGISLIKGVDEGPNGLKLISEVIGERLGIPMSVLMGANIASEVAEEKFCETTIGCKDPAQGQLLKDLMQTPNFRITVVQEVDTVEICGALKNIVAVGAGFCDGLGFGDNTKAAVIRLGLMEMIAFAKLFCSGTVSSATFLESCGVADLITTCYGGRNRKVAEAFARTGKSIEQLEKEMLNGQKLQGPQTARELHSILQHKGLVDKFPLFTAVYKVCYEGQPVGEFIRCLQNHPEHM.

Position 10-15 (10-15 (GSGNWG)) interacts with NAD(+). Residue lysine 120 coordinates substrate. NAD(+) is bound at residue alanine 153. Serine 154 carries the post-translational modification Phosphoserine. Lysine 204 serves as the catalytic Proton acceptor. Arginine 269 serves as a coordination point for NAD(+). Substrate is bound at residue 269–270 (RN). Lysine 289 is modified (N6-succinyllysine). NAD(+) is bound by residues lysine 296 and glutamine 298. Tyrosine 326 is subject to Phosphotyrosine.

It belongs to the NAD-dependent glycerol-3-phosphate dehydrogenase family. Homodimer.

It localises to the cytoplasm. The enzyme catalyses sn-glycerol 3-phosphate + NAD(+) = dihydroxyacetone phosphate + NADH + H(+). Functionally, has glycerol-3-phosphate dehydrogenase activity. The chain is Glycerol-3-phosphate dehydrogenase [NAD(+)], cytoplasmic from Mus musculus (Mouse).